We begin with the raw amino-acid sequence, 435 residues long: Serine hydroxymethyltransferase (435 aa).

Residues Leu131 and 135–137 contribute to the (6S)-5,6,7,8-tetrahydrofolate site; that span reads GHL. At Lys240 the chain carries N6-(pyridoxal phosphate)lysine.

It belongs to the SHMT family. In terms of assembly, homodimer. It depends on pyridoxal 5'-phosphate as a cofactor.

Its subcellular location is the cytoplasm. The catalysed reaction is (6R)-5,10-methylene-5,6,7,8-tetrahydrofolate + glycine + H2O = (6S)-5,6,7,8-tetrahydrofolate + L-serine. Its pathway is one-carbon metabolism; tetrahydrofolate interconversion. It participates in amino-acid biosynthesis; glycine biosynthesis; glycine from L-serine: step 1/1. Its function is as follows. Catalyzes the reversible interconversion of serine and glycine with tetrahydrofolate (THF) serving as the one-carbon carrier. This reaction serves as the major source of one-carbon groups required for the biosynthesis of purines, thymidylate, methionine, and other important biomolecules. Also exhibits THF-independent aldolase activity toward beta-hydroxyamino acids, producing glycine and aldehydes, via a retro-aldol mechanism. This Bifidobacterium longum subsp. infantis (strain ATCC 15697 / DSM 20088 / JCM 1222 / NCTC 11817 / S12) protein is Serine hydroxymethyltransferase.